Reading from the N-terminus, the 153-residue chain is Putative tRNA (cytidine(34)-2'-O)-methyltransferase (153 aa).

Glycine 102, isoleucine 122, and serine 131 together coordinate S-adenosyl-L-methionine.

This sequence belongs to the class IV-like SAM-binding methyltransferase superfamily. RNA methyltransferase TrmH family. TrmL subfamily.

It localises to the cytoplasm. The enzyme catalyses cytidine(34) in tRNA + S-adenosyl-L-methionine = 2'-O-methylcytidine(34) in tRNA + S-adenosyl-L-homocysteine + H(+). It carries out the reaction 5-carboxymethylaminomethyluridine(34) in tRNA(Leu) + S-adenosyl-L-methionine = 5-carboxymethylaminomethyl-2'-O-methyluridine(34) in tRNA(Leu) + S-adenosyl-L-homocysteine + H(+). In terms of biological role, could methylate the ribose at the nucleotide 34 wobble position in tRNA. In Synechocystis sp. (strain ATCC 27184 / PCC 6803 / Kazusa), this protein is Putative tRNA (cytidine(34)-2'-O)-methyltransferase.